The primary structure comprises 253 residues: Ribonuclease HII (253 aa).

One can recognise an RNase H type-2 domain in the interval 32–223 (APVAGLDEAG…FKTSGEEDRI (192 aa)). A divalent metal cation contacts are provided by Asp-38, Glu-39, and Asp-130.

This sequence belongs to the RNase HII family. The cofactor is Mn(2+). It depends on Mg(2+) as a cofactor.

The protein localises to the cytoplasm. The enzyme catalyses Endonucleolytic cleavage to 5'-phosphomonoester.. Its function is as follows. Endonuclease that specifically degrades the RNA of RNA-DNA hybrids. This Chelativorans sp. (strain BNC1) protein is Ribonuclease HII.